Here is a 1223-residue protein sequence, read N- to C-terminus: Glycerophosphocholine phosphodiesterase GDE1 (1223 aa).

The SPX domain occupies 1-213 (MKFGKTFANH…GTNQQMSTMK (213 aa)). Residues 43-59 (HNKNSYDEGRPPTKMRD) are compositionally biased toward basic and acidic residues. A disordered region spans residues 43 to 64 (HNKNSYDEGRPPTKMRDSSNSA). ANK repeat units follow at residues 427–456 (YKRT…EWNI), 472–502 (ESLT…NVKL), 504–533 (SSSL…DINY), 538–567 (LHET…DLEI), 572–601 (FGWT…NFDI), and 605–634 (GGWT…LVTH). The residue at position 653 (serine 653) is a Phosphoserine. A GP-PDE domain is found at 872-1217 (TRVIGHRGLG…DSVLAIRRGL (346 aa)). Glutamate 911, aspartate 913, and histidine 926 together coordinate a divalent metal cation. Serine 983 is subject to Phosphoserine.

This sequence belongs to the GDE1 family. The cofactor is a divalent metal cation.

It is found in the cytoplasm. The enzyme catalyses sn-glycerol 3-phosphocholine + H2O = sn-glycerol 3-phosphate + choline + H(+). The catalysed reaction is sn-glycero-3-phospho-1D-myo-inositol + H2O = myo-inositol + sn-glycerol 3-phosphate + H(+). In terms of biological role, glycerophosphocholine glycerophosphodiesterase responsible for the hydrolysis of intracellular glycerophosphocholine into glycerol-phosphate and choline. The choline is used for phosphatidyl-choline synthesis. Required for utilization of glycerophosphocholine as phosphate source. May also use glycerophosphoinositol as substrate in vivo. The sequence is that of Glycerophosphocholine phosphodiesterase GDE1 from Saccharomyces cerevisiae (strain ATCC 204508 / S288c) (Baker's yeast).